The primary structure comprises 127 residues: Fluoride-specific ion channel FluC (127 aa).

Helical transmembrane passes span 4–24 (LSVL…RYLI), 38–58 (YGTL…IAAF), 71–91 (IIGL…MDNV), and 104–124 (LNVL…FQLL). Positions 78 and 81 each coordinate Na(+).

It belongs to the fluoride channel Fluc/FEX (TC 1.A.43) family.

The protein localises to the cell inner membrane. It carries out the reaction fluoride(in) = fluoride(out). Its activity is regulated as follows. Na(+) is not transported, but it plays an essential structural role and its presence is essential for fluoride channel function. In terms of biological role, fluoride-specific ion channel. Important for reducing fluoride concentration in the cell, thus reducing its toxicity. This Vibrio campbellii (strain ATCC BAA-1116) protein is Fluoride-specific ion channel FluC.